The following is a 284-amino-acid chain: 2-dehydro-3-deoxyphosphooctonate aldolase (284 aa).

This sequence belongs to the KdsA family.

It is found in the cytoplasm. It carries out the reaction D-arabinose 5-phosphate + phosphoenolpyruvate + H2O = 3-deoxy-alpha-D-manno-2-octulosonate-8-phosphate + phosphate. It participates in carbohydrate biosynthesis; 3-deoxy-D-manno-octulosonate biosynthesis; 3-deoxy-D-manno-octulosonate from D-ribulose 5-phosphate: step 2/3. Its pathway is bacterial outer membrane biogenesis; lipopolysaccharide biosynthesis. This chain is 2-dehydro-3-deoxyphosphooctonate aldolase, found in Bordetella petrii (strain ATCC BAA-461 / DSM 12804 / CCUG 43448).